Here is a 246-residue protein sequence, read N- to C-terminus: Chloroplastic group IIB intron splicing facilitator CRS2-A, chloroplastic (246 aa).

The N-terminal 34 residues, 1–34 (MFCASSSPITSPLYPKAYKFSQTKSNSKRFSSLR), are a transit peptide targeting the chloroplast. A tRNA-binding site is contributed by Y64. The active-site Proton acceptor is H69. Y114, N116, and N162 together coordinate tRNA.

This sequence belongs to the PTH family. CRS2 subfamily. Part of large ribonucleo-protein complexes that include group IIB introns and either CAF1 or CAF2.

It localises to the plastid. The protein localises to the chloroplast stroma. Functionally, required for the splicing of group IIB introns in chloroplasts. The chain is Chloroplastic group IIB intron splicing facilitator CRS2-A, chloroplastic (CRS2A) from Arabidopsis thaliana (Mouse-ear cress).